Here is a 155-residue protein sequence, read N- to C-terminus: Ribosome maturation factor RimP (155 aa).

It belongs to the RimP family.

The protein localises to the cytoplasm. Its function is as follows. Required for maturation of 30S ribosomal subunits. This Listeria monocytogenes serotype 4a (strain HCC23) protein is Ribosome maturation factor RimP.